Here is a 403-residue protein sequence, read N- to C-terminus: Prostaglandin D2 receptor 2 (403 aa).

Residues 1–34 are Extracellular-facing; it reads MANITLKPLCPLLEEMVQLPNHSNSSLRYIDHVS. Residues Asn-3, Asn-21, and Asn-24 are each glycosylated (N-linked (GlcNAc...) asparagine). The helical transmembrane segment at 35–55 threads the bilayer; sequence VLLHGLASLLGLVENGLILFV. The Cytoplasmic segment spans residues 56–71; it reads VGCRMRQTVVTTWVLH. Residues 72-92 traverse the membrane as a helical segment; it reads LALSDLLAAASLPFFTYFLAV. Residues 93 to 104 lie on the Extracellular side of the membrane; the sequence is GHSWELGTTFCK. An intrachain disulfide couples Cys-103 to Cys-198. The chain crosses the membrane as a helical span at residues 105 to 125; it reads LHSSVFFLNMFASGFLLSAIS. Over 126 to 147 the chain is Cytoplasmic; that stretch reads LDRCLQVVRPVWAQNHRTVAAA. The helical transmembrane segment at 148-168 threads the bilayer; that stretch reads HRVCLMLWALAVLNTVPYFVF. The Extracellular portion of the chain corresponds to 169–209; that stretch reads RDTIPRRDGRIMCYYNMLLLNPGSDRDTTCDYRQKALAVSK. Residues 210–230 form a helical membrane-spanning segment; that stretch reads FLLAFMVPLAIIASSHVAVSL. The Cytoplasmic portion of the chain corresponds to 231–245; it reads QLHHRGRQRTGRFVR. A helical membrane pass occupies residues 246 to 266; that stretch reads LVAAIVVAFILCWGPYHIFSL. The Extracellular portion of the chain corresponds to 267–284; that stretch reads LEARAHSVTTLRQLASRG. The chain crosses the membrane as a helical span at residues 285–305; the sequence is LPFVTSLAFFNSVVNPLLYVL. Residues 306-403 are Cytoplasmic-facing; it reads TCPDMLHKLR…KQGSLSCTLD (98 aa). The Involved in the recycling of CRTH2 signature appears at 329–332; the sequence is DSDL. Phosphoserine is present on Ser-330. Disordered stretches follow at residues 332-353 and 384-403; these read LSTG…STTT and PRRV…CTLD. The segment covering 338-348 has biased composition (basic residues); sequence KRCRRRHRRRA. Ser-349 is modified (phosphoserine). Positions 393 to 403 are enriched in polar residues; the sequence is EKQGSLSCTLD.

This sequence belongs to the G-protein coupled receptor 1 family. In terms of processing, phosphorylated.

The protein resides in the cell membrane. In terms of biological role, receptor for prostaglandin D2 (PGD2). Coupled to the G(i)-protein. Receptor activation may result in pertussis toxin-sensitive decreases in cAMP levels and Ca(2+) mobilization. PI3K signaling is also implicated in mediating PTGDR2 effects. PGD2 induced receptor internalization. CRTH2 internalization can be regulated by diverse kinases such as, PKC, PKA, GRK2, GPRK5/GRK5 and GRK6. Receptor activation is responsible, at least in part, in immune regulation and allergic/inflammation responses. This Rattus norvegicus (Rat) protein is Prostaglandin D2 receptor 2 (Ptgdr2).